A 450-amino-acid chain; its full sequence is Glutamyl-tRNA reductase (450 aa).

Residues 45-48, S107, 112-114, and Q118 contribute to the substrate site; these read TCNR and ERE. C46 functions as the Nucleophile in the catalytic mechanism. 196 to 201 contacts NADP(+); the sequence is GTGAYA.

Belongs to the glutamyl-tRNA reductase family. Homodimer.

It carries out the reaction (S)-4-amino-5-oxopentanoate + tRNA(Glu) + NADP(+) = L-glutamyl-tRNA(Glu) + NADPH + H(+). Its pathway is porphyrin-containing compound metabolism; protoporphyrin-IX biosynthesis; 5-aminolevulinate from L-glutamyl-tRNA(Glu): step 1/2. Its function is as follows. Catalyzes the NADPH-dependent reduction of glutamyl-tRNA(Glu) to glutamate 1-semialdehyde (GSA). The polypeptide is Glutamyl-tRNA reductase (Micrococcus luteus (strain ATCC 4698 / DSM 20030 / JCM 1464 / CCM 169 / CCUG 5858 / IAM 1056 / NBRC 3333 / NCIMB 9278 / NCTC 2665 / VKM Ac-2230) (Micrococcus lysodeikticus)).